Here is a 645-residue protein sequence, read N- to C-terminus: Sentrin-specific protease 1 (645 aa).

Positions 1–200 (MDDIADRMRM…REIYRQLLQM (200 aa)) are interaction with CCAR2. Phosphoserine is present on residues S57, S117, and S157. Positions 92–117 (QSANGQWRNSTPSSSSSLQKSRNSRS) are disordered. The span at 99–117 (RNSTPSSSSSLQKSRNSRS) shows a compositional bias: low complexity. Residues 171 to 177 (PKKTQRR) carry the Nuclear localization signal motif. Positions 285–313 (KDSGTLHHPHHHHSVPHQPDNLAASNTQS) are disordered. Protease regions lie at residues 451–614 (LTIT…YADC) and 451–615 (LTIT…ADCI). Catalysis depends on residues H534 and D551. The Nuclear localization signal motif lies at 575–578 (KKRK). The active-site Nucleophile is C604. A Nuclear localization signal motif is present at residues 629–635 (PYFRKRM). A Nuclear export signal motif is present at residues 636–645 (VWEILHRKLL).

Belongs to the peptidase C48 family. In terms of assembly, interacts with RBM33; promoting ALKBH5 desumoylation and subsequent activation.

It is found in the nucleus. The protein resides in the cytoplasm. In terms of biological role, protease that catalyzes two essential functions in the SUMO pathway. The first is the hydrolysis of an alpha-linked peptide bond at the C-terminal end of the small ubiquitin-like modifier (SUMO) propeptides, SUMO1, SUMO2 and SUMO3 leading to the mature form of the proteins. The second is the deconjugation of SUMO1, SUMO2 and SUMO3 from targeted proteins, by cleaving an epsilon-linked peptide bond between the C-terminal glycine of the mature SUMO and the lysine epsilon-amino group of the target protein. Deconjugates SUMO1 from HIPK2. Deconjugates SUMO1 from HDAC1 and BHLHE40/DEC1, which decreases its transcriptional repression activity. Deconjugates SUMO1 from CLOCK, which decreases its transcriptional activation activity. Deconjugates SUMO2 from MTA1. Inhibits N(6)-methyladenosine (m6A) RNA methylation by mediating SUMO1 deconjugation from METTL3 and ALKBH5: METTL3 inhibits the m6A RNA methyltransferase activity, while ALKBH5 desumoylation promotes m6A demethylation. Desumoylates CCAR2 which decreases its interaction with SIRT1. Deconjugates SUMO1 from GPS2. In Pongo abelii (Sumatran orangutan), this protein is Sentrin-specific protease 1 (SENP1).